The sequence spans 1044 residues: AT-rich interactive domain-containing protein 5B (1044 aa).

Disordered stretches follow at residues P143–C211, R301–D350, M363–D392, N554–E591, Q603–S672, S733–S767, V811–E835, and T884–E912. Basic and acidic residues-rich tracts occupy residues V197 to C211, R301 to P310, and R337 to D350. The region spanning R212–K304 is the ARID domain. Residues K369–Q380 are compositionally biased toward polar residues. Positions V565 to E591 are enriched in low complexity. Basic and acidic residues-rich tracts occupy residues R611–H635, P644–E660, and S733–E746. The span at L752–S767 shows a compositional bias: low complexity. Composition is skewed to basic and acidic residues over residues K816 to E826 and L894 to K909.

This sequence belongs to the ARID5B family.

It is found in the nucleus. In terms of biological role, transcription coactivator that binds to the 5'-AATA[CT]-3' core sequence and plays a key role in adipogenesis and liver development. Required for adipogenesis: regulates triglyceride metabolism in adipocytes by regulating expression of adipogenic genes. This chain is AT-rich interactive domain-containing protein 5B (arid5b), found in Danio rerio (Zebrafish).